A 669-amino-acid chain; its full sequence is Leucine zipper putative tumor suppressor 2 (669 aa).

Residues 1–25 (MAIVQTLPVPLEPAPEAATAPQAPV) are compositionally biased toward low complexity. Disordered stretches follow at residues 1–56 (MAIV…PTFF), 92–131 (NEDF…IPVS), 150–201 (PVLP…AADK), and 215–323 (GTLS…SDEA). The required for centrosomal localization stretch occupies residues 1–332 (MAIVQTLPVP…ALLHCVLEGK (332 aa)). The segment covering 172 to 181 (LSGSQGSLTQ) has biased composition (polar residues). The span at 187-199 (ASSSSSSSSSSAA) shows a compositional bias: low complexity. A compositionally biased stretch (polar residues) spans 215-233 (GTLSDSGRNSLSSLPTYST). Low complexity-rich tracts occupy residues 241–251 (SSPGGHLPSHG) and 267–283 (GPSH…KSTG). Ser-249 is modified (phosphoserine). The span at 284-295 (SLGGRVAGGLLG) shows a compositional bias: gly residues. Ser-296 carries the phosphoserine modification. Residues 298–308 (TRASPDSSSCG) show a composition bias toward polar residues. Residues 311–320 (SPPPPPPPPS) show a composition bias toward pro residues. Residues 328 to 649 (VLEGKLRDRE…LELEARELAD (322 aa)) are a coiled coil. The interval 447–669 (SGEISLLKQQ…CLEEITATEI (223 aa)) is sufficient for interaction with CTNNB1. Residues 450-669 (ISLLKQQLKE…CLEEITATEI (220 aa)) form a sufficient for interaction with KATNB1 and for inhibition of katanin-mediated microtubule severing region. The residue at position 570 (Ser-570) is a Phosphoserine. Residues 631–640 (LEQELQQLSL) carry the Nuclear export signal motif.

This sequence belongs to the LZTS2 family. In terms of assembly, interacts with KATNB1. Also interacts with CTNNB1, gamma-tubulin and KIF23. Highly expressed in prostate and testis, and at slightly lower levels in spleen, thymus, uterus, small intestine and colon.

It localises to the cytoplasm. The protein localises to the cytoskeleton. Its subcellular location is the microtubule organizing center. It is found in the centrosome. Its function is as follows. Negative regulator of katanin-mediated microtubule severing and release from the centrosome. Required for central spindle formation and the completion of cytokinesis. May negatively regulate axonal outgrowth by preventing the formation of microtubule bundles that are necessary for transport within the elongating axon. Negative regulator of the Wnt signaling pathway. Represses beta-catenin-mediated transcriptional activation by promoting the nuclear exclusion of beta-catenin. The protein is Leucine zipper putative tumor suppressor 2 of Homo sapiens (Human).